A 174-amino-acid polypeptide reads, in one-letter code: ATP-dependent protease subunit HslV (174 aa).

Thr-2 is a catalytic residue. 3 residues coordinate Na(+): Gly-157, Cys-160, and Thr-163.

The protein belongs to the peptidase T1B family. HslV subfamily. A double ring-shaped homohexamer of HslV is capped on each side by a ring-shaped HslU homohexamer. The assembly of the HslU/HslV complex is dependent on binding of ATP.

The protein localises to the cytoplasm. The catalysed reaction is ATP-dependent cleavage of peptide bonds with broad specificity.. Its activity is regulated as follows. Allosterically activated by HslU binding. Protease subunit of a proteasome-like degradation complex believed to be a general protein degrading machinery. This chain is ATP-dependent protease subunit HslV, found in Shewanella woodyi (strain ATCC 51908 / MS32).